Consider the following 136-residue polypeptide: Large ribosomal subunit protein uL16c (136 aa).

The protein belongs to the universal ribosomal protein uL16 family. In terms of assembly, part of the 50S ribosomal subunit.

Its subcellular location is the plastid. The protein localises to the chloroplast. In Saccharum hybrid (Sugarcane), this protein is Large ribosomal subunit protein uL16c.